Consider the following 853-residue polypeptide: Leucine--tRNA ligase (853 aa).

A 'HIGH' region motif is present at residues 42–52 (PYPSGNLHMGH). The short motif at 615–619 (KMSKS) is the 'KMSKS' region element. ATP is bound at residue Lys618.

It belongs to the class-I aminoacyl-tRNA synthetase family.

It is found in the cytoplasm. It catalyses the reaction tRNA(Leu) + L-leucine + ATP = L-leucyl-tRNA(Leu) + AMP + diphosphate. The sequence is that of Leucine--tRNA ligase from Crocosphaera subtropica (strain ATCC 51142 / BH68) (Cyanothece sp. (strain ATCC 51142)).